A 1589-amino-acid chain; its full sequence is Centrosomal protein of 170 kDa protein B (1589 aa).

Positions 23–73 (IFVGREECELMLQSRSVDKQHAVINYDQDRDEHWVKDLGSLNGTFVNDMRI) constitute an FHA domain. 4 disordered regions span residues 130–261 (RSEA…GAAP), 287–309 (ITKFSLRQRRPPGKEATPGEMVS), 325–388 (LLHR…RLQR), and 409–583 (FDED…EVEE). Composition is skewed to basic and acidic residues over residues 147-156 (RPEKGDRRPG) and 243-253 (PAHEMPTKDAE). Residues 330-344 (GPGDDRHSTKSDLPV) show a composition bias toward basic and acidic residues. Residues Ser360 and Ser421 each carry the phosphoserine modification. Basic and acidic residues-rich tracts occupy residues 430–446 (PKADKRRGPTPADRDRP) and 467–476 (LKREKTEERL). Residues 478-489 (SPSPASRTPARP) show a composition bias toward low complexity. Residues Ser480 and Ser492 each carry the phosphoserine modification. Residues 520-530 (EKVPPVLPAPL) show a composition bias toward pro residues. Residue Ser536 is modified to Phosphoserine. The segment covering 538–548 (VGPPTPPPAPT) has biased composition (pro residues). Residue Thr542 is modified to Phosphothreonine. Residues Ser597, Ser619, Ser655, Ser711, Ser721, Ser746, Ser748, Ser751, Ser753, Ser772, Ser829, Ser853, Ser954, Ser972, Ser986, and Ser988 each carry the phosphoserine modification. Disordered stretches follow at residues 598-895 (PELS…LQDL), 934-1316 (DAEC…PYGF), 1350-1374 (DGDTLGSSEPAHSASLSNMPSTPAS), and 1532-1552 (AQPGLGKGRVAAQSPPSPASA). Over residues 711-722 (SPAGPESSRRSG) the composition is skewed to low complexity. The span at 957–972 (DTASTVSLRSGKSGPS) shows a compositional bias: polar residues. Basic residues predominate over residues 1029 to 1038 (SAIRRGHRPR). Phosphoserine occurs at positions 1135, 1179, and 1199. The span at 1221–1230 (AANTATTTGP) shows a compositional bias: polar residues. Over residues 1286–1301 (PRAGSSSRARSRAPGP) the composition is skewed to low complexity. Residue Thr1304 is modified to Phosphothreonine. Ser1356 and Ser1362 each carry phosphoserine. The segment covering 1363–1374 (ASLSNMPSTPAS) has biased composition (polar residues). Low complexity predominate over residues 1542 to 1552 (AAQSPPSPASA). Phosphoserine is present on residues Ser1545 and Ser1548.

This sequence belongs to the CEP170 family.

It localises to the cytoplasm. Its subcellular location is the cytoskeleton. Plays a role in microtubule organization. In Homo sapiens (Human), this protein is Centrosomal protein of 170 kDa protein B (CEP170B).